The following is a 910-amino-acid chain: E3 ubiquitin-protein ligase MARCHF6 (910 aa).

An N-acetylmethionine modification is found at Met-1. The RING-CH-type zinc-finger motif lies at 1-62 (MDTAEEDICR…ELCKHRFAFT (62 aa)). The Cytoplasmic segment spans residues 1–91 (MDTAEEDICR…LVTSIGTAIR (91 aa)). The Zn(2+) site is built by Cys-9, Cys-12, Cys-26, Cys-28, His-36, Cys-39, Cys-52, and Cys-55. Residues 92-112 (YWFHYTLVAFAWLGVVPLTAC) traverse the membrane as a helical segment. Residues 113 to 142 (RIYKCLFTGSVSSLLTLPLDMLSTENLLAD) are Extracellular-facing. Residues 143–163 (CLQGCFVVTCTLCAFISLVWL) form a helical membrane-spanning segment. The Cytoplasmic segment spans residues 164 to 283 (REQIVHGGAP…WERMLGLDGS (120 aa)). Residues 185-256 (AAGHHQNEAP…AADANNGAQD (72 aa)) form a disordered region. Acidic residues predominate over residues 223-248 (DAQDDQAEEEEEDNEEEDDAGVEDAA). Residues 284–304 (LVFLEHVFWVVSLNTLFILVF) form a helical membrane-spanning segment. Residues 305-336 (AFCPYHIGHFSLVGLGFEEHVQASHFEGLITT) lie on the Extracellular side of the membrane. Residues 337-357 (IVGYILLAITLIICHGLATLV) traverse the membrane as a helical segment. The Cytoplasmic segment spans residues 358–376 (KFHRSRRLLGVCYIVVKVS). The helical transmembrane segment at 377–397 (LLVVVEIGVFPLICGWWLDIC) threads the bilayer. Over 398-421 (SLEMFDATLKDRELSFQSAPGTTM) the chain is Extracellular. A helical membrane pass occupies residues 422-442 (FLHWLVGMVYVFYFASFILLL). Residues 443 to 480 (REVLRPGVLWFLRNLNDPDFNPVQEMIHLPIYRHLRRF) are Cytoplasmic-facing. The helical transmembrane segment at 481 to 501 (ILSVIVFGSIVLLMLWLPIRI) threads the bilayer. At 502-519 (IKSVLPNFLPYNVMLYSD) the chain is on the extracellular side. A helical transmembrane segment spans residues 520-540 (APVSELSLELLLLQVVLPALL). At 541–632 (EQGHTRQWLK…YRRPLNFPLR (92 aa)) the chain is on the cytoplasmic side. The chain crosses the membrane as a helical span at residues 633–653 (IFLLIVFMCITLLIASLICLT). Residues 654-678 (LPVFAGRWLMSFWTGTAKIHELYTA) are Extracellular-facing. The helical transmembrane segment at 679 to 699 (ACGLYVCWLTIRAVTVMVAWM) threads the bilayer. Topologically, residues 700 to 721 (PQGRRVIFQKVKEWSLMIMKTL) are cytoplasmic. The chain crosses the membrane as a helical span at residues 722 to 742 (IVAVLLAGVVPLLLGLLFELV). Residues 743 to 764 (IVAPLRVPLDQTPLFYPWQDWA) lie on the Extracellular side of the membrane. The chain crosses the membrane as a helical span at residues 765-785 (LGVLHAKIIAAITLMGPQWWL). Over 786 to 815 (KTVIEQVYANGIRNIDLHYIVRKLAAPVIS) the chain is Cytoplasmic. Residues 816-836 (VLLLSLCVPYVIASGVVPLLG) form a helical membrane-spanning segment. Over 837-848 (VTAEMQNLVHRR) the chain is Extracellular. Residues 849–869 (IYPFLLMVVVLMAILSFQVRQ) traverse the membrane as a helical segment. Topologically, residues 870 to 910 (FKRLYEHIKNDKYLVGQRLVNYERKSGKQGSSPPPPQSSQE) are cytoplasmic.

In terms of assembly, interacts with DIO2. Interacts with SQLE. Auto-ubiquitinated, which results in proteasomal degradation. Deubiquitinated by USP19; protecting MARCHF6 from p97-mediated proteasomal degradation. In terms of tissue distribution, present in brain (at protein level).

It is found in the endoplasmic reticulum membrane. The enzyme catalyses S-ubiquitinyl-[E2 ubiquitin-conjugating enzyme]-L-cysteine + [acceptor protein]-L-lysine = [E2 ubiquitin-conjugating enzyme]-L-cysteine + N(6)-ubiquitinyl-[acceptor protein]-L-lysine.. Its pathway is protein modification; protein ubiquitination. Endoplasmic reticulum membrane-associated E3 ubiquitin ligase that plays a critical role in mitigating endoplasmic reticulum stress, the regulation of cholesterol and lipid homeostasis, and ferroptosis. Acts as a pivotal component of both the Ac/N-degron pathway (targeting the N-terminal acetyl group of substrates) and the ER-associated protein degradation-cytosol (ERAD-C) pathway (targeting misfolded substrates). For instance, mediates the degradation of Ac/N-degron-bearing proteins such as the G-protein regulator RGS2 and the lipid droplet protein PLIN2. Suppresses endoplasmic reticulum stress and ferroptosis through cytosolic POMC degradation. Prevents ferroptosis by acting as a NADPH sensor during lipid peroxidation through its C-terminal regulatory region. Facilitates also the degradation of selected endoplasmic reticulum proteins by associating with signal peptide peptidase for the turnover of endogenous tail-anchored proteins. Promotes ubiquitination of DIO2, leading to its degradation. By ubiquitinating and thereby modulating the stability of many proteins of the cholesterol pathway including SQLE, CYP51A1, CYP11A1 and HMGCR, acts as a crucial post-translational regulator of cholesterol synthesis. This chain is E3 ubiquitin-protein ligase MARCHF6, found in Homo sapiens (Human).